The chain runs to 75 residues: Cytochrome c oxidase subunit 6C (75 aa).

The Mitochondrial matrix segment spans residues 1–13; it reads MASEVLAKPQMRG. A helical transmembrane segment spans residues 14-54; it reads LLARRLRIHMVGAFLISLGVAALYKFGVAEPRKKAYADFYK. Residues 55–75 are Mitochondrial intermembrane-facing; the sequence is NYSPEKDFEEMKKAGVFRSIK.

It belongs to the cytochrome c oxidase subunit 6c family. Component of the cytochrome c oxidase (complex IV, CIV), a multisubunit enzyme composed of 14 subunits. The complex is composed of a catalytic core of 3 subunits MT-CO1, MT-CO2 and MT-CO3, encoded in the mitochondrial DNA, and 11 supernumerary subunits COX4I, COX5A, COX5B, COX6A, COX6B, COX6C, COX7A, COX7B, COX7C, COX8 and NDUFA4, which are encoded in the nuclear genome. The complex exists as a monomer or a dimer and forms supercomplexes (SCs) in the inner mitochondrial membrane with NADH-ubiquinone oxidoreductase (complex I, CI) and ubiquinol-cytochrome c oxidoreductase (cytochrome b-c1 complex, complex III, CIII), resulting in different assemblies (supercomplex SCI(1)III(2)IV(1) and megacomplex MCI(2)III(2)IV(2)).

It is found in the mitochondrion inner membrane. The protein operates within energy metabolism; oxidative phosphorylation. Functionally, component of the cytochrome c oxidase, the last enzyme in the mitochondrial electron transport chain which drives oxidative phosphorylation. The respiratory chain contains 3 multisubunit complexes succinate dehydrogenase (complex II, CII), ubiquinol-cytochrome c oxidoreductase (cytochrome b-c1 complex, complex III, CIII) and cytochrome c oxidase (complex IV, CIV), that cooperate to transfer electrons derived from NADH and succinate to molecular oxygen, creating an electrochemical gradient over the inner membrane that drives transmembrane transport and the ATP synthase. Cytochrome c oxidase is the component of the respiratory chain that catalyzes the reduction of oxygen to water. Electrons originating from reduced cytochrome c in the intermembrane space (IMS) are transferred via the dinuclear copper A center (CU(A)) of subunit 2 and heme A of subunit 1 to the active site in subunit 1, a binuclear center (BNC) formed by heme A3 and copper B (CU(B)). The BNC reduces molecular oxygen to 2 water molecules using 4 electrons from cytochrome c in the IMS and 4 protons from the mitochondrial matrix. The protein is Cytochrome c oxidase subunit 6C (COX6C) of Saimiri sciureus (Common squirrel monkey).